The sequence spans 959 residues: Kinesin-like protein NACK1 (959 aa).

Positions 1–28 (MTVRTPGTPASKIDKTPATTPNGHRGRE) are disordered. A Kinesin motor domain is found at 30–353 (KIVVTVRLRP…LYFATRAKEV (324 aa)). Residue 117 to 124 (GQTSSGKT) coordinates ATP. Thr-145 bears the Phosphothreonine mark. Residues 362 to 429 (VVSDKQLVKH…LRRKLQEEQG (68 aa)) are a coiled coil. Disordered regions lie at residues 417–438 (VDEL…SVSP), 451–473 (SPNL…GRQS), 598–640 (LPSN…FLKS), and 658–700 (NRAP…SVNM). Basic and acidic residues-rich tracts occupy residues 418–429 (DELRRKLQEEQG) and 454–466 (LEEK…ERTR). Positions 557–598 (KSVSANLKEEIARLHSQGSTIADLEEQLENVQKSLDKLVMSL) form a coiled coil. Over residues 600 to 611 (SNNDQQSNNDTT) the composition is skewed to low complexity. A compositionally biased stretch (basic residues) spans 613–623 (KAKHPSKKKKL). Positions 630-640 (NSINRQNFLKS) are enriched in polar residues. 2 positions are modified to phosphothreonine: Thr-675 and Thr-690. The required for the binding to NPK1 stretch occupies residues 685-756 (SSKEGTPYRR…EANEAAGYNL (72 aa)).

This sequence belongs to the TRAFAC class myosin-kinesin ATPase superfamily. Kinesin family. KIN-7 subfamily. As to quaternary structure, interacts (via C-terminus) with NPK1 (via C-terminus). In terms of processing, phosphorylated at Thr-145, Thr-675 and Thr-690 by CDKAs and CDKBs. The phosphorylation occurs before metaphase and inhibits the interaction with NPK1 preventing the transition to cytokinesis.

It localises to the cytoplasm. The protein resides in the nucleus. Its subcellular location is the cytoskeleton. The protein localises to the phragmoplast. Its function is as follows. Probable plus end-directed motor protein that functions in the NACK-PQR (NPK1-NQK1/MEK1-NRK1) MAP kinase signaling pathway, which is essential for somatic cell cytokinesis, especially for the cell-plate formation and its expansion. Regulates the activity and the localization of NPK1 by association through the non-catalytic region of the kinase. This chain is Kinesin-like protein NACK1 (NACK1), found in Nicotiana tabacum (Common tobacco).